The chain runs to 221 residues: Ras-related protein Rab-28 (221 aa).

Serine 2 carries the N-acetylserine modification. Phosphoserine is present on serine 8. The GTP site is built by glycine 21, glycine 24, lysine 25, threonine 26, serine 27, glycine 38, lysine 39, tyrosine 41, and threonine 44. Residue threonine 26 participates in Mg(2+) binding. Positions 35–49 are switch I; it reads ETFGKQYKQTIGLDF. Mg(2+) contacts are provided by threonine 44 and aspartate 68. Residues 68–85 form a switch II region; sequence DIGGQTIGGKMLDKYIYG. GTP contacts are provided by glycine 71, asparagine 129, lysine 130, aspartate 132, alanine 160, and lysine 161. At cysteine 218 the chain carries Cysteine methyl ester. The S-farnesyl cysteine moiety is linked to residue cysteine 218. Residues 219–221 constitute a propeptide, removed in mature form; it reads AVQ.

The protein belongs to the small GTPase superfamily. Rab family. In terms of assembly, interacts (prenylated form) with PDE6D; the interaction promotes RAB28 delivery to the photoreceptor outer segments. Interacts with KCNJ13; the interaction may facilitate cone outer segments phagocytosis. Interacts with RELA; the interaction contributes to RELA transport from cytoplasm to nucleus. It depends on Mg(2+) as a cofactor. In terms of processing, isoprenylated.

It localises to the cell membrane. Its subcellular location is the cytoplasm. It is found in the cytoskeleton. The protein resides in the cilium basal body. The protein localises to the nucleus. It carries out the reaction GTP + H2O = GDP + phosphate + H(+). With respect to regulation, regulated by guanine nucleotide exchange factors (GEFs) which promote the exchange of bound GDP for free GTP. Regulated by GTPase activating proteins (GAPs) which increase the GTP hydrolysis activity. Inhibited by GDP dissociation inhibitors (GDIs). Its function is as follows. The small GTPases Rab are key regulators of intracellular membrane trafficking, from the formation of transport vesicles to their fusion with membranes. Rabs cycle between an inactive GDP-bound form and an active GTP-bound form that is able to recruit to membranes different sets of downstream effectors directly responsible for vesicle formation, movement, tethering and fusion. RAB28 is required for shedding and phagocytosis of cone cell outer segments (OS) discs in the retina. Also participates in nuclear factor kappa-B p65/RELA nuclear transport in endothelial cells. This chain is Ras-related protein Rab-28 (RAB28), found in Bos taurus (Bovine).